The sequence spans 389 residues: PqqA peptide cyclase (389 aa).

Residues 19 to 235 (VGLPLWLLAE…NEYRVRLEAE (217 aa)) enclose the Radical SAM core domain. [4Fe-4S] cluster contacts are provided by C33, C37, and C40.

The protein belongs to the radical SAM superfamily. PqqE family. As to quaternary structure, interacts with PqqD. The interaction is necessary for activity of PqqE. It depends on [4Fe-4S] cluster as a cofactor.

The enzyme catalyses [PQQ precursor protein] + S-adenosyl-L-methionine = E-Y cross-linked-[PQQ precursor protein] + 5'-deoxyadenosine + L-methionine + H(+). It participates in cofactor biosynthesis; pyrroloquinoline quinone biosynthesis. In terms of biological role, catalyzes the cross-linking of a glutamate residue and a tyrosine residue in the PqqA protein as part of the biosynthesis of pyrroloquinoline quinone (PQQ). The chain is PqqA peptide cyclase from Pseudomonas savastanoi pv. phaseolicola (strain 1448A / Race 6) (Pseudomonas syringae pv. phaseolicola (strain 1448A / Race 6)).